The sequence spans 69 residues: Putative membrane protein insertion efficiency factor (69 aa).

It belongs to the UPF0161 family.

The protein localises to the cell inner membrane. Functionally, could be involved in insertion of integral membrane proteins into the membrane. In Laribacter hongkongensis (strain HLHK9), this protein is Putative membrane protein insertion efficiency factor.